The primary structure comprises 265 residues: Glutamate racemase (265 aa).

Substrate is bound by residues 12–13 (DS) and 44–45 (YG). Cysteine 75 serves as the catalytic Proton donor/acceptor. 76–77 (NT) is a substrate binding site. Residue cysteine 183 is the Proton donor/acceptor of the active site. Position 184–185 (184–185 (TH)) interacts with substrate.

The protein belongs to the aspartate/glutamate racemases family.

It carries out the reaction L-glutamate = D-glutamate. Its pathway is cell wall biogenesis; peptidoglycan biosynthesis. Provides the (R)-glutamate required for cell wall biosynthesis. The protein is Glutamate racemase of Carboxydothermus hydrogenoformans (strain ATCC BAA-161 / DSM 6008 / Z-2901).